The sequence spans 261 residues: 5'-nucleotidase SurE (261 aa).

A divalent metal cation is bound by residues Asp8, Asp9, Ser43, and Asn96.

Belongs to the SurE nucleotidase family. A divalent metal cation serves as cofactor.

The protein localises to the cytoplasm. The enzyme catalyses a ribonucleoside 5'-phosphate + H2O = a ribonucleoside + phosphate. Its function is as follows. Nucleotidase that shows phosphatase activity on nucleoside 5'-monophosphates. In Cereibacter sphaeroides (strain ATCC 17025 / ATH 2.4.3) (Rhodobacter sphaeroides), this protein is 5'-nucleotidase SurE.